Here is a 310-residue protein sequence, read N- to C-terminus: ER-derived vesicles protein ERV29 (310 aa).

Residues 1–108 lie on the Cytoplasmic side of the membrane; that stretch reads MSYRGPIGNF…YLNKWKHYPY (108 aa). The disordered stretch occupies residues 11–31; the sequence is GGMPMSSSQGPYSGGAQFRSN. A helical membrane pass occupies residues 109–129; sequence FFVVVFLVVVTVSMLIGASLL. Over 130–137 the chain is Lumenal; sequence VLRKQTNY. A helical membrane pass occupies residues 138 to 158; it reads ATGVLCACVISQALVYGLFTG. Over 159–209 the chain is Cytoplasmic; sequence SSFVLRNFSVIGGLLIAFSDSIVQNKTTFGMLPELNSKNDKAKGYLLFAGR. Residues 210–230 traverse the membrane as a helical segment; the sequence is ILIVLMFIAFTFSKSWFTVVL. The Lumenal portion of the chain corresponds to 231–245; sequence TIIGTICFAIGYKTK. Residues 246-266 traverse the membrane as a helical segment; sequence FASIMLGLILTFYNITLNNYW. Residues 267 to 310 are Cytoplasmic-facing; that stretch reads FYNNTKRDFLKYEFYQNLSIIGGLLLVTNTGAGELSVDEKKKIY. Positions 307 to 310 match the Di-lysine motif motif; sequence KKIY.

This sequence belongs to the SURF4 family.

It localises to the endoplasmic reticulum membrane. Functionally, constituent of COPII-coated endoplasmic reticulum-derived transport vesicles. Required for efficient transport of a subset of secretory proteins to the Golgi. The C-terminal di-lysine motif is required for exit from the endoplasmic reticulum. Required directly for packaging glycosylated pro-alpha-factor into COPII vesicles. Facilitates retrograde transport from the Golgi to the endoplasmic reticulum. This Saccharomyces cerevisiae (strain ATCC 204508 / S288c) (Baker's yeast) protein is ER-derived vesicles protein ERV29 (ERV29).